The following is a 595-amino-acid chain: Aspartate--tRNA(Asp/Asn) ligase (595 aa).

E175 contributes to the L-aspartate binding site. The tract at residues 199-202 (QQFK) is aspartate. Residues R221 and H451 each coordinate L-aspartate. ATP is bound at residue 221–223 (RDE). E485 lines the ATP pocket. R492 is a binding site for L-aspartate. Residue 537–540 (GVDR) coordinates ATP.

It belongs to the class-II aminoacyl-tRNA synthetase family. Type 1 subfamily. In terms of assembly, homodimer.

The protein resides in the cytoplasm. The catalysed reaction is tRNA(Asx) + L-aspartate + ATP = L-aspartyl-tRNA(Asx) + AMP + diphosphate. Aspartyl-tRNA synthetase with relaxed tRNA specificity since it is able to aspartylate not only its cognate tRNA(Asp) but also tRNA(Asn). Reaction proceeds in two steps: L-aspartate is first activated by ATP to form Asp-AMP and then transferred to the acceptor end of tRNA(Asp/Asn). The protein is Aspartate--tRNA(Asp/Asn) ligase of Acidiphilium cryptum (strain JF-5).